Here is a 766-residue protein sequence, read N- to C-terminus: Single-minded homolog 1 (766 aa).

Residues 1–53 (MKEKSKNAARTRREKENSEFYELAKLLPLPSAITSQLDKASIIRLTTSYLKMR) form the bHLH domain. PAS domains are found at residues 77–147 (GREL…QPYH) and 218–288 (PPSA…LVKG). In terms of domain architecture, PAC spans 292–335 (TKYYRFLAKHGGWVWVQSYATIVHNSRSSRPHCIVSVNYVLTDT). A Single-minded C-terminal domain is found at 336–766 (EYKGLQLSLD…GTSVIITNGS (431 aa)). A compositionally biased stretch (polar residues) spans 353–365 (AFSYTSSSTPTMT). Disordered stretches follow at residues 353-431 (AFSY…SQHD), 528-563 (WDED…EPSK), and 642-662 (SPRE…SSPN). A Nuclear localization signal motif is present at residues 368–387 (RKGAKSRLSSSKSKSRTSPY). The span at 373-385 (SRLSSSKSKSRTS) shows a compositional bias: low complexity. Residues 394-404 (HTERSESDHDS) show a composition bias toward basic and acidic residues. Residues 649–662 (DNSPTALSRISSPN) are compositionally biased toward polar residues.

As to quaternary structure, efficient DNA binding requires dimerization with another bHLH protein. Heterodimer; forms a heterodimer with ARNT, ARNT2.

The protein localises to the nucleus. In terms of biological role, transcriptional factor that may have pleiotropic effects during embryogenesis and in the adult. In Pan troglodytes (Chimpanzee), this protein is Single-minded homolog 1 (SIM1).